A 146-amino-acid chain; its full sequence is Hut operon positive regulatory protein (146 aa).

Belongs to the HutP family. Homohexamer.

Functionally, antiterminator that binds to cis-acting regulatory sequences on the mRNA in the presence of histidine, thereby suppressing transcription termination and activating the hut operon for histidine utilization. This chain is Hut operon positive regulatory protein, found in Bacillus cereus (strain AH820).